A 368-amino-acid chain; its full sequence is Spermidine/putrescine import ATP-binding protein PotA (368 aa).

Residues 6–236 (VSIKNVSKFF…PVNVFAATFI (231 aa)) enclose the ABC transporter domain. Position 38–45 (38–45 (GPSGCGKT)) interacts with ATP.

The protein belongs to the ABC transporter superfamily. Spermidine/putrescine importer (TC 3.A.1.11.1) family. The complex is composed of two ATP-binding proteins (PotA), two transmembrane proteins (PotB and PotC) and a solute-binding protein (PotD).

Its subcellular location is the cell inner membrane. The catalysed reaction is ATP + H2O + polyamine-[polyamine-binding protein]Side 1 = ADP + phosphate + polyamineSide 2 + [polyamine-binding protein]Side 1.. Functionally, part of the ABC transporter complex PotABCD involved in spermidine/putrescine import. Responsible for energy coupling to the transport system. The sequence is that of Spermidine/putrescine import ATP-binding protein PotA from Thermotoga maritima (strain ATCC 43589 / DSM 3109 / JCM 10099 / NBRC 100826 / MSB8).